The chain runs to 299 residues: MEDSMDMDNIAPLRPQNFLFGCELKADKKEYSFKVEDDENEHQLSLRTVSLGASAKDELHVVEAEGINYEGKTIKIALASLKPSVQPTVSLGGFEITPPVILRLKSGSGPVYVSGQHLVALEDLESSDDEDEEHEPSPKNAKRIAPDSASKVPRKKTRLEEEEEDSDEDDDDDEDDDDEDDDEEEEETPVKKTDSTKSKAAQKLNHNGKASALSTTQKTPKTPEQKGKQDTKPQTPKTPKTPLSSEEIKAKMQTYLEKGNVLPKVEVKFANYVKNCFRTENQKVIEDLWKWRQSLKDGK.

The segment covering 125-134 (ESSDDEDEEH) has biased composition (acidic residues). The segment at 125–247 (ESSDDEDEEH…TPKTPLSSEE (123 aa)) is disordered. A Nuclear localization signal motif is present at residues 153 to 158 (PRKKTR). Residues 160-187 (EEEEEDSDEDDDDDEDDDDEDDDEEEEE) are compositionally biased toward acidic residues. The span at 188 to 197 (TPVKKTDSTK) shows a compositional bias: basic and acidic residues. Residues 189–195 (PVKKTDS) carry the Nuclear localization signal motif. Repeats lie at residues 218 to 220 (KTP), 221 to 223 (KTP), 237 to 239 (KTP), and 240 to 242 (KTP). Residues 218-242 (KTPKTPEQKGKQDTKPQTPKTPKTP) form a 4 X 3 AA repeats of K-T-P region. Residues 221–231 (KTPEQKGKQDT) show a composition bias toward basic and acidic residues. The segment covering 232–242 (KPQTPKTPKTP) has biased composition (low complexity).

Belongs to the nucleoplasmin family. Decamer formed by two pentameric rings associated in a head-to-head fashion. In terms of processing, phosphorylated.

It localises to the cytoplasm. Its subcellular location is the nucleus. The protein localises to the nucleoplasm. The protein resides in the nucleolus. Its function is as follows. Acts as a chaperonin for the core histones H3, H2B and H4. Associated with nucleolar ribonucleoprotein structures and bind single-stranded nucleic acids. It may function in the assembly and/or transport of ribosome. May stimulate endonuclease activity on apurinic/apyrimidinic (AP) double-stranded DNA. May inhibit endonuclease activity on AP single-stranded RNA. This chain is Nucleophosmin (npm1), found in Xenopus laevis (African clawed frog).